Reading from the N-terminus, the 388-residue chain is Succinate--CoA ligase [ADP-forming] subunit beta (388 aa).

In terms of domain architecture, ATP-grasp spans lysine 9–histidine 244. ATP-binding positions include lysine 46, glycine 53–glycine 55, glutamate 99, threonine 102, and glutamate 107. Asparagine 199 and aspartate 213 together coordinate Mg(2+). Substrate-binding positions include asparagine 264 and glycine 321–valine 323.

The protein belongs to the succinate/malate CoA ligase beta subunit family. In terms of assembly, heterotetramer of two alpha and two beta subunits. Requires Mg(2+) as cofactor.

It carries out the reaction succinate + ATP + CoA = succinyl-CoA + ADP + phosphate. The catalysed reaction is GTP + succinate + CoA = succinyl-CoA + GDP + phosphate. It functions in the pathway carbohydrate metabolism; tricarboxylic acid cycle; succinate from succinyl-CoA (ligase route): step 1/1. Succinyl-CoA synthetase functions in the citric acid cycle (TCA), coupling the hydrolysis of succinyl-CoA to the synthesis of either ATP or GTP and thus represents the only step of substrate-level phosphorylation in the TCA. The beta subunit provides nucleotide specificity of the enzyme and binds the substrate succinate, while the binding sites for coenzyme A and phosphate are found in the alpha subunit. The sequence is that of Succinate--CoA ligase [ADP-forming] subunit beta from Shewanella denitrificans (strain OS217 / ATCC BAA-1090 / DSM 15013).